Reading from the N-terminus, the 242-residue chain is Uridylate kinase (242 aa).

ATP is bound by residues 15-18, glycine 58, and arginine 62; that span reads KISG. UMP is bound by residues aspartate 77 and 139–146; that span reads TGNPFFTT. Residues threonine 166, tyrosine 172, and aspartate 175 each coordinate ATP.

Belongs to the UMP kinase family. As to quaternary structure, homohexamer.

It is found in the cytoplasm. The enzyme catalyses UMP + ATP = UDP + ADP. Its pathway is pyrimidine metabolism; CTP biosynthesis via de novo pathway; UDP from UMP (UMPK route): step 1/1. With respect to regulation, inhibited by UTP. In terms of biological role, catalyzes the reversible phosphorylation of UMP to UDP. The chain is Uridylate kinase from Buchnera aphidicola subsp. Acyrthosiphon pisum (strain APS) (Acyrthosiphon pisum symbiotic bacterium).